The sequence spans 292 residues: Rhodanese-like domain-containing protein 11, chloroplastic (292 aa).

The transit peptide at 1 to 56 (MESLSLPVLNPLLASGSNLFRNQHSRMTSSMVSSLKSPIGGTSLSTVRRFGVGVVR) directs the protein to the chloroplast. The 124-residue stretch at 101–224 (SLSNKPLLDV…AQDEDLVTEG (124 aa)) folds into the Rhodanese domain. The active-site Cysteine persulfide intermediate is Cys184.

It is found in the plastid. The protein localises to the chloroplast. This Arabidopsis thaliana (Mouse-ear cress) protein is Rhodanese-like domain-containing protein 11, chloroplastic (STR11).